A 339-amino-acid chain; its full sequence is 4-hydroxy-2-oxovalerate aldolase (339 aa).

The Pyruvate carboxyltransferase domain occupies 7-259; that stretch reads VILHDMSLRD…QSGIDLYKIM (253 aa). A substrate-binding site is contributed by 15–16; it reads RD. Asp-16 contributes to the Mn(2+) binding site. The Proton acceptor role is filled by His-19. The substrate site is built by Ser-169 and His-198. 2 residues coordinate Mn(2+): His-198 and His-200. Tyr-289 lines the substrate pocket.

It belongs to the 4-hydroxy-2-oxovalerate aldolase family.

The catalysed reaction is (S)-4-hydroxy-2-oxopentanoate = acetaldehyde + pyruvate. The polypeptide is 4-hydroxy-2-oxovalerate aldolase (Marinomonas sp. (strain MWYL1)).